Here is a 425-residue protein sequence, read N- to C-terminus: Alpha-N-acetylgalactosaminidase (425 aa).

NAD(+) contacts are provided by residues 29–30 (NR), glutamate 51, 99–102 (WLTH), 119–120 (EV), and asparagine 148. Residue tyrosine 177 participates in substrate binding. Residues 194–198 (FHNHW) and tyrosine 211 contribute to the NAD(+) site. Substrate contacts are provided by residues 211 to 214 (YPTH) and tyrosine 293.

This sequence belongs to the Gfo/Idh/MocA family. Glycosyl hydrolase 109 subfamily. It depends on NAD(+) as a cofactor.

It carries out the reaction Cleavage of non-reducing alpha-(1-&gt;3)-N-acetylgalactosamine residues from human blood group A and AB mucin glycoproteins, Forssman hapten and blood group A lacto series glycolipids.. In terms of biological role, glycosidase that has specific alpha-N-acetylgalactosaminidase activity. The chain is Alpha-N-acetylgalactosaminidase from Bacteroides fragilis (strain ATCC 25285 / DSM 2151 / CCUG 4856 / JCM 11019 / LMG 10263 / NCTC 9343 / Onslow / VPI 2553 / EN-2).